The chain runs to 862 residues: Protein translocase subunit SecA (862 aa).

Residues Gln86, 104-108, and Asp499 contribute to the ATP site; that span reads GEGKT. Residues Cys848, Cys850, Cys859, and His860 each coordinate Zn(2+).

This sequence belongs to the SecA family. As to quaternary structure, monomer and homodimer. Part of the essential Sec protein translocation apparatus which comprises SecA, SecYEG and auxiliary proteins SecDF-YajC and YidC. The cofactor is Zn(2+).

Its subcellular location is the cell inner membrane. The protein resides in the cytoplasm. It carries out the reaction ATP + H2O + cellular proteinSide 1 = ADP + phosphate + cellular proteinSide 2.. Functionally, part of the Sec protein translocase complex. Interacts with the SecYEG preprotein conducting channel. Has a central role in coupling the hydrolysis of ATP to the transfer of proteins into and across the cell membrane, serving both as a receptor for the preprotein-SecB complex and as an ATP-driven molecular motor driving the stepwise translocation of polypeptide chains across the membrane. The sequence is that of Protein translocase subunit SecA from Ehrlichia chaffeensis (strain ATCC CRL-10679 / Arkansas).